A 349-amino-acid chain; its full sequence is Protein Wnt-7a (349 aa).

Residues 1–31 (MNRKARRCLGHLFLSLGMVYLRIGGFSTVVA) form the signal peptide. Disulfide bonds link Cys-73-Cys-84, Cys-123-Cys-131, Cys-133-Cys-152, Cys-200-Cys-214, and Cys-202-Cys-209. 2 N-linked (GlcNAc...) asparagine glycosylation sites follow: Asn-83 and Asn-127. A lipid anchor (O-palmitoleoyl serine; by PORCN) is attached at Ser-206. The disordered linker stretch occupies residues 238–266 (VEPVRASRNKRPTFLKIKKPLSYRKPMDT). Disulfide bonds link Cys-278-Cys-309, Cys-294-Cys-304, Cys-308-Cys-348, Cys-324-Cys-339, Cys-326-Cys-336, and Cys-331-Cys-332. N-linked (GlcNAc...) asparagine glycosylation is present at Asn-295.

The protein belongs to the Wnt family. As to quaternary structure, forms a soluble 1:1 complex with AFM; this prevents oligomerization and is required for prolonged biological activity. The complex with AFM may represent the physiological form in body fluids. Interacts with PORCN. Interacts (via intrinsically disordered linker region) with RECK; interaction with RECK confers ligand selectivity for Wnt7 in brain endothelial cells and allows these cells to selectively respond to Wnt7. Interacts with FZD5. Post-translationally, palmitoleoylation is required for efficient binding to frizzled receptors. Depalmitoleoylation leads to Wnt signaling pathway inhibition.

It localises to the secreted. The protein localises to the extracellular space. It is found in the extracellular matrix. Functionally, ligand for members of the frizzled family of seven transmembrane receptors that functions in the canonical Wnt/beta-catenin signaling pathway. Plays an important role in embryonic development, including dorsal versus ventral patterning during limb development, skeleton development and urogenital tract development. Required for central nervous system (CNS) angiogenesis and blood-brain barrier regulation. Required for normal, sexually dimorphic development of the Mullerian ducts, and for normal fertility in both sexes. Required for normal neural stem cell proliferation in the hippocampus dentate gyrus. Required for normal progress through the cell cycle in neural progenitor cells, for self-renewal of neural stem cells, and for normal neuronal differentiation and maturation. Promotes formation of synapses via its interaction with FZD5. The polypeptide is Protein Wnt-7a (WNT7A) (Chlorocebus aethiops (Green monkey)).